The primary structure comprises 275 residues: Bis(5'-nucleosyl)-tetraphosphatase, symmetrical (275 aa).

It belongs to the Ap4A hydrolase family.

It carries out the reaction P(1),P(4)-bis(5'-adenosyl) tetraphosphate + H2O = 2 ADP + 2 H(+). Its function is as follows. Hydrolyzes diadenosine 5',5'''-P1,P4-tetraphosphate to yield ADP. In Nitrosospira multiformis (strain ATCC 25196 / NCIMB 11849 / C 71), this protein is Bis(5'-nucleosyl)-tetraphosphatase, symmetrical.